Reading from the N-terminus, the 431-residue chain is Histidine--tRNA ligase (431 aa).

The protein belongs to the class-II aminoacyl-tRNA synthetase family. In terms of assembly, homodimer.

Its subcellular location is the cytoplasm. The catalysed reaction is tRNA(His) + L-histidine + ATP = L-histidyl-tRNA(His) + AMP + diphosphate + H(+). In Neisseria gonorrhoeae (strain ATCC 700825 / FA 1090), this protein is Histidine--tRNA ligase.